The sequence spans 241 residues: MTGLEILPAVDVAGGQAVRLVQGAAGTETRYGSPLEAALAWQAAGARWIHLVDLDAAFGRGSNRELLAEIVARVDVAVELSGGIRDDESLRVALATGCARVNIGTAALENPEWVRRVVAEYGEKIAVGLDVRDGRLAARGWTKDGGELFEVLARLDADGCARYVVTDVARDGTLGGPNIELLRAVCAATDRPVVASGGISSLDDVRAVAALVPLGVEGLIIGKALYAGVFSLREAMTAAQA.

The active-site Proton acceptor is Asp-11. Asp-130 functions as the Proton donor in the catalytic mechanism.

Belongs to the HisA/HisF family.

Its subcellular location is the cytoplasm. It catalyses the reaction 1-(5-phospho-beta-D-ribosyl)-5-[(5-phospho-beta-D-ribosylamino)methylideneamino]imidazole-4-carboxamide = 5-[(5-phospho-1-deoxy-D-ribulos-1-ylimino)methylamino]-1-(5-phospho-beta-D-ribosyl)imidazole-4-carboxamide. The protein operates within amino-acid biosynthesis; L-histidine biosynthesis; L-histidine from 5-phospho-alpha-D-ribose 1-diphosphate: step 4/9. The protein is 1-(5-phosphoribosyl)-5-[(5-phosphoribosylamino)methylideneamino] imidazole-4-carboxamide isomerase of Acidothermus cellulolyticus (strain ATCC 43068 / DSM 8971 / 11B).